Reading from the N-terminus, the 158-residue chain is Crossover junction endodeoxyribonuclease RuvC (158 aa).

Residues Asp7, Glu67, and Asp140 contribute to the active site. Mg(2+) is bound by residues Asp7, Glu67, and Asp140.

The protein belongs to the RuvC family. Homodimer which binds Holliday junction (HJ) DNA. The HJ becomes 2-fold symmetrical on binding to RuvC with unstacked arms; it has a different conformation from HJ DNA in complex with RuvA. In the full resolvosome a probable DNA-RuvA(4)-RuvB(12)-RuvC(2) complex forms which resolves the HJ. Mg(2+) is required as a cofactor.

Its subcellular location is the cytoplasm. The catalysed reaction is Endonucleolytic cleavage at a junction such as a reciprocal single-stranded crossover between two homologous DNA duplexes (Holliday junction).. The RuvA-RuvB-RuvC complex processes Holliday junction (HJ) DNA during genetic recombination and DNA repair. Endonuclease that resolves HJ intermediates. Cleaves cruciform DNA by making single-stranded nicks across the HJ at symmetrical positions within the homologous arms, yielding a 5'-phosphate and a 3'-hydroxyl group; requires a central core of homology in the junction. The consensus cleavage sequence is 5'-(A/T)TT(C/G)-3'. Cleavage occurs on the 3'-side of the TT dinucleotide at the point of strand exchange. HJ branch migration catalyzed by RuvA-RuvB allows RuvC to scan DNA until it finds its consensus sequence, where it cleaves and resolves the cruciform DNA. The protein is Crossover junction endodeoxyribonuclease RuvC of Dictyoglomus turgidum (strain DSM 6724 / Z-1310).